We begin with the raw amino-acid sequence, 57 residues long: Granulin-1 (57 aa).

Intrachain disulfides connect Cys-4/Cys-16 and Cys-10/Cys-26.

Belongs to the granulin family. Post-translationally, granulins are disulfide bridged. Ubiquitous.

The protein localises to the secreted. Granulins have possible cytokine-like activity. They may play a role in inflammation, wound repair, and tissue remodeling. In Cyprinus carpio (Common carp), this protein is Granulin-1.